We begin with the raw amino-acid sequence, 260 residues long: E3 ubiquitin-protein ligase SRFP1 (260 aa).

The segment at 11-80 (FGRMGFGCKH…VAQVCYNCGV (70 aa)) adopts a CHY-type zinc-finger fold. Zn(2+)-binding residues include Cys-18, His-20, Cys-31, Cys-32, Cys-38, Cys-41, His-42, His-50, Cys-62, Cys-65, Cys-75, Cys-78, Cys-87, Cys-90, His-103, Cys-104, Cys-107, Cys-110, His-120, Cys-121, Cys-124, Cys-127, His-136, and Cys-138. The CTCHY-type zinc-finger motif lies at 82-146 (MGEYFCSACK…CCIENSMKNN (65 aa)). Residues 147–190 (CPICYEYLFDSLRETSVLRCGHTMHLQCFHEMLKHDKFSCPICS) form an RING-type; atypical zinc finger.

As to expression, expressed in roots, leaves, nodes and panicles.

It is found in the nucleus. It localises to the cytoplasm. The enzyme catalyses S-ubiquitinyl-[E2 ubiquitin-conjugating enzyme]-L-cysteine + [acceptor protein]-L-lysine = [E2 ubiquitin-conjugating enzyme]-L-cysteine + N(6)-ubiquitinyl-[acceptor protein]-L-lysine.. It participates in protein modification; protein ubiquitination. Its function is as follows. Possesses E3 ubiquitin-protein ligase activity in vitro. Possesses transactivation activity in yeast cells. May modulate abiotic stress responses by negatively regulating antioxidant enzymes-mediated reactive oxygen species (ROS) removal. In Oryza sativa subsp. japonica (Rice), this protein is E3 ubiquitin-protein ligase SRFP1.